A 241-amino-acid polypeptide reads, in one-letter code: MGRGKIVIRRIDNSTSRQVTFSKRRNGLLKKAKELSILCDAEVGLVVFSSTGRLYEFSSTNMKTVIDRYTNAKEELLGGNATSEIKIWQREAASLRQQLHNLQESHKQLMGEELSGLGVRDLQGLENRLEISLRNIRMRKDNLLKSEIEELHVKGSLIHQENIELSRSLNVMSQQKLELYNKLQACEQRGATDANESSSTPYSFRIIQNANMPPSLELSQSQQREGECSKTAAPELGLHLP.

Residues 1–61 (MGRGKIVIRR…GRLYEFSSTN (61 aa)) form the MADS-box domain. In terms of domain architecture, K-box spans 85-178 (IKIWQREAAS…LNVMSQQKLE (94 aa)). The tract at residues 216–241 (LELSQSQQREGECSKTAAPELGLHLP) is disordered.

In terms of assembly, interacts with TB1. As to expression, expressed in seedling roots and shoots. Highly expressed in young leaves.

The protein resides in the nucleus. In terms of biological role, transcriptional factor that targets the CArG motif 5'-C(A/T)TTAAAAAG-3' in the promoter of D14. Directly suppresses D14 expression to control the outgrowth of axillary buds. The chain is MADS-box transcription factor 57 from Oryza sativa subsp. japonica (Rice).